The primary structure comprises 291 residues: MLVAALLCALCCGLLAASARAGYSEDRCSWRGSGLTQEPGSVGQLTLDCTEGAIEWLYPAGALRLTLGGSDPGTRPSIVCLRPTRPFAGAQVFAERMAGNLELLLAEGQGLAGGRCMRWGPRERRALFLQATPHRDISRRVAAFQFELHEDQRAEMSPQAQGFGVDGACRPCSDAELLLTACTSDFVIHGTIHGVVHDMELQESVITVVATRVIRQTLPLFQEGSSEGRGQASVRTLLRCGVRPGPGSFLFMGWSRFGEAWLGCAPRFQEFSRVYSAALAAHLNPCEVALD.

A signal peptide spans M1–A21. Intrachain disulfides connect C28–C49, C80–C116, C169–C240, C172–C264, and C182–C286.

This sequence belongs to the meteorin family. In terms of assembly, monomer.

The protein resides in the secreted. Involved in both glial cell differentiation and axonal network formation during neurogenesis. Promotes astrocyte differentiation and transforms cerebellar astrocytes into radial glia. Also induces axonal extension in small and intermediate neurons of sensory ganglia by activating nearby satellite glia. The chain is Meteorin (Metrn) from Rattus norvegicus (Rat).